Consider the following 234-residue polypeptide: Carboxy-S-adenosyl-L-methionine synthase (234 aa).

S-adenosyl-L-methionine is bound by residues Y35, 60 to 62, 83 to 84, and R191; these read GCS and DN.

This sequence belongs to the class I-like SAM-binding methyltransferase superfamily. Cx-SAM synthase family. As to quaternary structure, homodimer.

The enzyme catalyses prephenate + S-adenosyl-L-methionine = carboxy-S-adenosyl-L-methionine + 3-phenylpyruvate + H2O. In terms of biological role, catalyzes the conversion of S-adenosyl-L-methionine (SAM) to carboxy-S-adenosyl-L-methionine (Cx-SAM). The protein is Carboxy-S-adenosyl-L-methionine synthase of Campylobacter lari (strain RM2100 / D67 / ATCC BAA-1060).